Here is a 244-residue protein sequence, read N- to C-terminus: MGALGLEGRGGRLQGRGSLLLAVAGATSLVTLLLAVPITVLAVLALVPQDQGGLVTETADPGAQAQQGLGFQKLPEEEPETDLSPGLPAAHLIGAPLKGQGLGWETTKEQAFLTSGTQFSDAEGLALPQDGLYYLYCLVGYRGRAPPGGGDPQGRSVTLRSSLYRAGGAYGPGTPELLLEGAETVTPVLDPARRQGYGPLWYTSVGFGGLVQLRRGERVYVNISHPDMVDFARGKTFFGAVMVG.

The Cytoplasmic segment spans residues 1 to 18 (MGALGLEGRGGRLQGRGS). A helical; Signal-anchor for type II membrane protein membrane pass occupies residues 19–48 (LLLAVAGATSLVTLLLAVPITVLAVLALVP). Residues 49-244 (QDQGGLVTET…KTFFGAVMVG (196 aa)) are Extracellular-facing. Residues 88 to 243 (PAAHLIGAPL…GKTFFGAVMV (156 aa)) form the THD domain. The N-linked (GlcNAc...) asparagine glycan is linked to Asn222.

It belongs to the tumor necrosis factor family. Heterotrimer of either two LTB and one LTA subunits or (less prevalent) one LTB and two LTA subunits. As to expression, spleen and thymus.

Its subcellular location is the membrane. Cytokine that binds to LTBR/TNFRSF3. May play a specific role in immune response regulation. Provides the membrane anchor for the attachment of the heterotrimeric complex to the cell surface. Isoform 2 is probably non-functional. The chain is Lymphotoxin-beta (LTB) from Homo sapiens (Human).